Here is a 182-residue protein sequence, read N- to C-terminus: Probable inosine/xanthosine triphosphatase (182 aa).

Mg(2+) is bound at residue Glu-65. 65-66 contacts substrate; the sequence is EA.

It belongs to the YjjX NTPase family. Homodimer. The cofactor is Mg(2+). Mn(2+) is required as a cofactor.

It catalyses the reaction XTP + H2O = XDP + phosphate + H(+). It carries out the reaction ITP + H2O = IDP + phosphate + H(+). In terms of biological role, phosphatase that hydrolyzes non-canonical purine nucleotides such as XTP and ITP to their respective diphosphate derivatives. Probably excludes non-canonical purines from DNA/RNA precursor pool, thus preventing their incorporation into DNA/RNA and avoiding chromosomal lesions. In Pyrobaculum neutrophilum (strain DSM 2338 / JCM 9278 / NBRC 100436 / V24Sta) (Thermoproteus neutrophilus), this protein is Probable inosine/xanthosine triphosphatase.